The following is a 162-amino-acid chain: MIQRVYVALGSNLAEPREQIQAALDAFERLPETRLVAVSPLYISDPLGPADQPRFVNGVAALDTNLAPLDLLDALQAIELEQGRVRDLRWGPRTLDLDILLFGEQLLDLPRLKVPHYHMQARAFVLYPLADLAPDLRLPDGRHLPELLAACPFEGIERLPGA.

It belongs to the HPPK family.

The catalysed reaction is 6-hydroxymethyl-7,8-dihydropterin + ATP = (7,8-dihydropterin-6-yl)methyl diphosphate + AMP + H(+). Its pathway is cofactor biosynthesis; tetrahydrofolate biosynthesis; 2-amino-4-hydroxy-6-hydroxymethyl-7,8-dihydropteridine diphosphate from 7,8-dihydroneopterin triphosphate: step 4/4. Functionally, catalyzes the transfer of pyrophosphate from adenosine triphosphate (ATP) to 6-hydroxymethyl-7,8-dihydropterin, an enzymatic step in folate biosynthesis pathway. The sequence is that of 2-amino-4-hydroxy-6-hydroxymethyldihydropteridine pyrophosphokinase (folK) from Pseudomonas aeruginosa (strain ATCC 15692 / DSM 22644 / CIP 104116 / JCM 14847 / LMG 12228 / 1C / PRS 101 / PAO1).